A 518-amino-acid polypeptide reads, in one-letter code: PTS system mannitol-specific EIICB component (518 aa).

The Cytoplasmic segment spans residues 1 to 31 (MDTMSNSQQNKGIGRKVQAFGSFLSSMIMPN). A PTS EIIC type-2 domain is found at 20-352 (FGSFLSSMIM…LKFTKDPKQD (333 aa)). A helical membrane pass occupies residues 32–53 (IGAFIAWGFIAAIFIDNGWFPN). At 54–57 (KDLA) the chain is on the extracellular side. A helical transmembrane segment spans residues 58–78 (QLAGPMITYLIPLLIAFSGGR). Residues 79-142 (LIHDLRGGII…QGFEMLFNNF (64 aa)) are Cytoplasmic-facing. The helical transmembrane segment at 143–164 (SAGILGFIMTIFGFEVLAPIMK) threads the bilayer. Residues 165-173 (FIMHILSVG) are Extracellular-facing. Residues 174 to 194 (VEALVHAHLLPLVSILVEPAK) form a helical membrane-spanning segment. Topologically, residues 195-281 (IVFLNNAINH…VLMRPLLFVS (87 aa)) are cytoplasmic. Residues 282–301 (VILGGMTGVATYSLLDFGFK) traverse the membrane as a helical segment. At 302–321 (TPASPGSIIVYAINAPKGEF) the chain is on the extracellular side. A helical membrane pass occupies residues 322–343 (LHMLTGVVLAALVSFVVSALIL). Residues 344 to 518 (KFTKDPKQDL…LINNLKEDQD (175 aa)) lie on the Cytoplasmic side of the membrane. The interval 369–406 (SVASKLSAKDDNKAADNKTAETTTATAASNKAEDKDSD) is disordered. Positions 375 to 387 (SAKDDNKAADNKT) are enriched in basic and acidic residues. A compositionally biased stretch (low complexity) spans 388–398 (AETTTATAASN). One can recognise a PTS EIIB type-2 domain in the interval 426 to 518 (DHVIFACDAG…LINNLKEDQD (93 aa)). Cysteine 432 serves as the catalytic Phosphocysteine intermediate. A Phosphocysteine; by EIIA modification is found at cysteine 432.

As to quaternary structure, homodimer.

The protein resides in the cell membrane. It catalyses the reaction D-mannitol(out) + N(pros)-phospho-L-histidyl-[protein] = D-mannitol 1-phosphate(in) + L-histidyl-[protein]. The phosphoenolpyruvate-dependent sugar phosphotransferase system (sugar PTS), a major carbohydrate active transport system, catalyzes the phosphorylation of incoming sugar substrates concomitantly with their translocation across the cell membrane. The enzyme II CmtAB PTS system is involved in D-mannitol transport. The sequence is that of PTS system mannitol-specific EIICB component from Staphylococcus carnosus.